A 416-amino-acid chain; its full sequence is Formyl-CoA:oxalate CoA-transferase (416 aa).

CoA-binding positions include 17–18, Arg-38, 72–75, 96–98, His-104, and 137–140; these read QS, LNTK, NFH, and KAYE. Asp-169 serves as the catalytic Nucleophile. Position 248 to 250 (248 to 250) interacts with substrate; it reads GGQ. 273-275 lines the CoA pocket; the sequence is QEQ.

Belongs to the CoA-transferase III family. Frc subfamily. As to quaternary structure, homodimer.

It carries out the reaction formyl-CoA + oxalate = oxalyl-CoA + formate. The protein operates within metabolic intermediate degradation; oxalate degradation; CO(2) and formate from oxalate: step 1/2. Involved in the catabolism of oxalate and in the adapatation to low pH via the induction of the oxalate-dependent acid tolerance response (ATR). Catalyzes the transfer of the CoA moiety from formyl-CoA to oxalate. This is Formyl-CoA:oxalate CoA-transferase from Escherichia coli O6:H1 (strain CFT073 / ATCC 700928 / UPEC).